A 265-amino-acid chain; its full sequence is Glutamate racemase (265 aa).

Substrate contacts are provided by residues 12-13 (DS) and 44-45 (YG). Cys-75 acts as the Proton donor/acceptor in catalysis. 76-77 (NT) contributes to the substrate binding site. Cys-186 functions as the Proton donor/acceptor in the catalytic mechanism. 187–188 (TH) is a substrate binding site.

Belongs to the aspartate/glutamate racemases family.

The catalysed reaction is L-glutamate = D-glutamate. It participates in cell wall biogenesis; peptidoglycan biosynthesis. Provides the (R)-glutamate required for cell wall biosynthesis. This Pseudomonas paraeruginosa (strain DSM 24068 / PA7) (Pseudomonas aeruginosa (strain PA7)) protein is Glutamate racemase.